Reading from the N-terminus, the 772-residue chain is MASSNVDSSEPRISRESSLKRSLSISKSLKGLFKSGGGNANTGPTTAAAAAAPSSISTPEVPTLATKDKQDRLKNLAANKEKELQTSRRGVASPSLSPTRHVSLSNLAKLSLTSRAGTGQVDPNVIHETSPLASDEESTDLAFGKRQSSSNRSSSFSNEEQEPNNKYPLLEKLMGDLDEMVCGSIDTQLSKSPDTVEASSLRRSRSTQRKRLNSFSLRPRALSNPGQNPNHPVENRERSNTSSIDLLMSHESESRAIYKSDQFSVYPDGHHAHHLKVVPIVHDLEQSLNKPKSSFSFSGFFKTHRTIADDGENLATALSLLPANRFSFHKRLSQIIDEENGNHNADEELEHNGNNGVDSDSDADYDNQSSGNSNPSDDESESDEDGYKGPNKSANVPKIVNEKSVIGANELKLINQLTEKIDNGFCLKGSKSDAVSSNEPSSAPRKQHLCEKYGKSIGIIGQGAYGVVKLCYKFIDPDEPDLKDNTYFHDNKLFYAVKELKPRPDEPPKKFSTRLTSEFVIGLSLSGGNKSRRSSARTHPNILNVIDLMQTPNAFYEVMEFCPSGDLYSLITRSSKSDSVLHPLEADCFMKQLLHGIQYMHAHGVAHCDIKPENLLFLPTGVLKICDFGTSSVFQTAWEKKAHFQTGPAGSEPYVAPEEFIPKQQYDPRLVDCWSCGIIYCVMVLGHYLWKIAIKGKDSVYDAFLEDMEKHGQYYVFDEMKHVSPGMNRYRTAALYHIFQVDPNKRITVDSLLKSSWMKRTKCCVTYPPRPV.

4 disordered regions span residues 1 to 102, 115 to 165, 185 to 241, and 344 to 396; these read MASS…TRHV, RAGT…EPNN, IDTQ…RSNT, and NADE…SANV. The span at 9-19 shows a compositional bias: basic and acidic residues; sequence SEPRISRESSL. 2 stretches are compositionally biased toward low complexity: residues 20–33 and 41–59; these read KRSLSISKSLKGLF and NTGPTTAAAAAAPSSISTP. Positions 66–86 are enriched in basic and acidic residues; the sequence is TKDKQDRLKNLAANKEKELQT. Low complexity predominate over residues 146–158; sequence RQSSSNRSSSFSN. Basic residues predominate over residues 202 to 212; sequence RRSRSTQRKRL. In terms of domain architecture, Protein kinase spans 454–758; the sequence is GKSIGIIGQG…VDSLLKSSWM (305 aa). Residues 460–468 and Lys-498 each bind ATP; that span reads IGQGAYGVV. The active-site Proton acceptor is the Asp-609.

It belongs to the protein kinase superfamily. CAMK Ser/Thr protein kinase family. NPR/HAL subfamily. HAL5 sub-subfamily.

It carries out the reaction L-seryl-[protein] + ATP = O-phospho-L-seryl-[protein] + ADP + H(+). It catalyses the reaction L-threonyl-[protein] + ATP = O-phospho-L-threonyl-[protein] + ADP + H(+). This is Probable serine/threonine-protein kinase HAL5-like from Kluyveromyces lactis (strain ATCC 8585 / CBS 2359 / DSM 70799 / NBRC 1267 / NRRL Y-1140 / WM37) (Yeast).